A 190-amino-acid chain; its full sequence is COMM domain-containing protein 1 (190 aa).

An N-acetylalanine modification is found at A2. The tract at residues 2 to 123 (AAGELEGGKP…RWNSGLRGLS (122 aa)) is sufficient for interaction with SLC12A2. Cu cation is bound by residues H101, M110, and H134. The COMM domain occupies 118-186 (GLRGLSWRVD…EVEESISTLI (69 aa)). The segment at 125–190 (RVDGKSQSRH…SISTLISQPN (66 aa)) is required for binding to PtdIns(4,5)P2.

The protein belongs to the COMM domain-containing protein 1 family. In terms of assembly, component of the commander complex consisting of the CCC subcomplex and the retriever subcomplex. Component of the CCC (COMMD/CCDC22/CCDC93) subcomplex consisting of COMMD1, COMMD2, COMMD3, COMMD4, COMMD5, COMMD6, COMMD7, COMMD8, COMMD9, COMMD10, CCDC22 and CCDC93; within the complex forms a heterodimer with COMMD6. Interacts with VPS35L; the interaction associates the CCC complex with the retriever complex. Identified in a complex with an E3 ubiquitin ligase complex composed of TCEB1/elongin C, CUL2, SOCS1 and RBX1; in the complex interacts directly with SOCS1 and CUL2. Identified in a complex with NF-kappa-B. Interacts directly with SLC12A2. Interacts directly with ATP7B (via the N-terminal region). Interacts with ATP7A. Interacts with FAM107A; this interaction stabilizes COMMD1 in the nucleus. Interacts with CCS, CDKN2A, RELA, REL, RELB, NFKB1/p105, NFKB2/p100, NFKBIB, SCNN1D, SCNN1B, CFTR, CLU, SGK1, AKT1, CUL1, CUL2, CUL3, CUL4A, CUL4B, CUL5, CUL7, HIF1A. Post-translationally, acetylated by EP300 ina stimuli-specific manner; protecting it from XIAP-mediated proteasomal degradation and required for interaction with RElA in response to stress. Ubiquitinated; undergoes both 'Lys-63'- and 'Lys-48'-linked polyubiquitination. Ubiquitinated by XIAP, leading to its proteasomal degradation. In terms of tissue distribution, ubiquitous. Highest expression in the liver, with lower expression in brain, lung, placenta, pancreas, small intestine, heart, skeletal muscle, kidney and placenta. Down-regulated in cancer tissues.

The protein localises to the nucleus. Its subcellular location is the cytoplasm. The protein resides in the endosome membrane. It localises to the cytoplasmic vesicle. It is found in the early endosome. The protein localises to the recycling endosome. Its function is as follows. Scaffold protein in the commander complex that is essential for endosomal recycling of transmembrane cargos; the commander complex is composed of the CCC subcomplex and the retriever subcomplex. Can modulate activity of cullin-RING E3 ubiquitin ligase (CRL) complexes by displacing CAND1; in vitro promotes CRL E3 activity and dissociates CAND1 from CUL1 and CUL2. Promotes ubiquitination of NF-kappa-B subunit RELA and its subsequent proteasomal degradation. Down-regulates NF-kappa-B activity. Involved in the regulation of membrane expression and ubiquitination of SLC12A2. Modulates Na(+) transport in epithelial cells by regulation of apical cell surface expression of amiloride-sensitive sodium channel (ENaC) subunits and by promoting their ubiquitination presumably involving NEDD4L. Promotes the localization of SCNN1D to recycling endosomes. Promotes CFTR cell surface expression through regulation of its ubiquitination. Down-regulates SOD1 activity by interfering with its homodimerization. Plays a role in copper ion homeostasis. Involved in copper-dependent ATP7A trafficking between the trans-Golgi network and vesicles in the cell periphery; the function is proposed to depend on its association within the CCC complex and cooperation with the WASH complex on early endosomes. Can bind one copper ion per monomer. May function to facilitate biliary copper excretion within hepatocytes. Binds to phosphatidylinositol 4,5-bisphosphate (PtdIns(4,5)P2). Involved in the regulation of HIF1A-mediated transcription; competes with ARNT/Hif-1-beta for binding to HIF1A resulting in decreased DNA binding and impaired transcriptional activation by HIF-1. Negatively regulates neuroblastoma G1/S phase cell cycle progression and cell proliferation by stimulating ubiquitination of NF-kappa-B subunit RELA and NF-kappa-B degradation in a FAM107A- and actin-dependent manner. The sequence is that of COMM domain-containing protein 1 (COMMD1) from Homo sapiens (Human).